The chain runs to 304 residues: ATP synthase gamma chain (304 aa).

Belongs to the ATPase gamma chain family. In terms of assembly, F-type ATPases have 2 components, CF(1) - the catalytic core - and CF(0) - the membrane proton channel. CF(1) has five subunits: alpha(3), beta(3), gamma(1), delta(1), epsilon(1). CF(0) has three main subunits: a, b and c.

Its subcellular location is the cell membrane. In terms of biological role, produces ATP from ADP in the presence of a proton gradient across the membrane. The gamma chain is believed to be important in regulating ATPase activity and the flow of protons through the CF(0) complex. This is ATP synthase gamma chain from Mycolicibacterium paratuberculosis (strain ATCC BAA-968 / K-10) (Mycobacterium paratuberculosis).